The following is a 190-amino-acid chain: MGLYQYVRALYKDPKEFLGELYKQRIQQWRREPPIVEVERPTRIDRARALGYKPLPGIKIVRVRVRKGTRKREEIKGGRRPKAEYRIRPLGVNLQWIAEERANRLHRNMEVLGSYWVGEDGLYKWYEVILVDPFNPNIYNRPEYVWLLQKNQRGRVFRGKTSSARKFRGLRNGGLGAEKVRPSKRANFKD.

Belongs to the eukaryotic ribosomal protein eL15 family.

In Nanoarchaeum equitans (strain Kin4-M), this protein is Large ribosomal subunit protein eL15 (rpl15e).